Consider the following 226-residue polypeptide: V-type proton ATPase subunit E 1 (226 aa).

Residue alanine 2 is modified to N-acetylalanine. A Phosphotyrosine modification is found at tyrosine 56.

It belongs to the V-ATPase E subunit family. In terms of assembly, V-ATPase is a heteromultimeric enzyme made up of two complexes: the ATP-hydrolytic V1 complex and the proton translocation V0 complex. The V1 complex consists of three catalytic AB heterodimers that form a heterohexamer, three peripheral stalks each consisting of EG heterodimers, one central rotor including subunits D and F, and the regulatory subunits C and H. The proton translocation complex V0 consists of the proton transport subunit a, a ring of proteolipid subunits c9c'', rotary subunit d, subunits e and f, and the accessory subunits ATP6AP1/Ac45 and ATP6AP2/PRR. Interacts with RABL2/RABL2A; binds preferentially to GTP-bound RABL2. Interacts with ALDOC. Interacts with RAB11B. Expressed in brain (at protein level).

It localises to the apical cell membrane. The protein localises to the cytoplasmic vesicle. Its subcellular location is the secretory vesicle. The protein resides in the synaptic vesicle membrane. It is found in the clathrin-coated vesicle membrane. Functionally, subunit of the V1 complex of vacuolar(H+)-ATPase (V-ATPase), a multisubunit enzyme composed of a peripheral complex (V1) that hydrolyzes ATP and a membrane integral complex (V0) that translocates protons. V-ATPase is responsible for acidifying and maintaining the pH of intracellular compartments and in some cell types, is targeted to the plasma membrane, where it is responsible for acidifying the extracellular environment. The protein is V-type proton ATPase subunit E 1 (Atp6v1e1) of Rattus norvegicus (Rat).